Here is a 421-residue protein sequence, read N- to C-terminus: ATP-dependent RNA helicase RhlB (421 aa).

Positions 9 to 37 match the Q motif motif; the sequence is QKFSDFALHPKVIEALENKGFHNCTPIQA. Residues 40-219 form the Helicase ATP-binding domain; that stretch reads LPLTLAGRDV…FEQMNNAEYV (180 aa). 53–60 is an ATP binding site; it reads AQTGTGKT. The DEAD box motif lies at 165–168; that stretch reads DEAD. A Helicase C-terminal domain is found at 245–390; that stretch reads RLLQTLIEEE…VSKYNPEALM (146 aa). The segment at 393–421 is disordered; the sequence is LPKPLRLTRSRPGNGPRRTGAPRNRRRSG. A compositionally biased stretch (low complexity) spans 403-414; it reads RPGNGPRRTGAP.

This sequence belongs to the DEAD box helicase family. RhlB subfamily. In terms of assembly, component of the RNA degradosome, which is a multiprotein complex involved in RNA processing and mRNA degradation.

The protein localises to the cytoplasm. It catalyses the reaction ATP + H2O = ADP + phosphate + H(+). Functionally, DEAD-box RNA helicase involved in RNA degradation. Has RNA-dependent ATPase activity and unwinds double-stranded RNA. This Citrobacter koseri (strain ATCC BAA-895 / CDC 4225-83 / SGSC4696) protein is ATP-dependent RNA helicase RhlB.